Consider the following 304-residue polypeptide: tRNA pseudouridine synthase B (304 aa).

The active-site Nucleophile is aspartate 44.

It belongs to the pseudouridine synthase TruB family. Type 1 subfamily.

It carries out the reaction uridine(55) in tRNA = pseudouridine(55) in tRNA. Functionally, responsible for synthesis of pseudouridine from uracil-55 in the psi GC loop of transfer RNAs. The sequence is that of tRNA pseudouridine synthase B from Novosphingobium aromaticivorans (strain ATCC 700278 / DSM 12444 / CCUG 56034 / CIP 105152 / NBRC 16084 / F199).